A 318-amino-acid chain; its full sequence is tRNA U34 carboxymethyltransferase (318 aa).

Carboxy-S-adenosyl-L-methionine-binding residues include lysine 88, tryptophan 102, lysine 107, glycine 126, methionine 192, tyrosine 196, and arginine 311.

The protein belongs to the class I-like SAM-binding methyltransferase superfamily. CmoB family. Homotetramer.

It carries out the reaction carboxy-S-adenosyl-L-methionine + 5-hydroxyuridine(34) in tRNA = 5-carboxymethoxyuridine(34) in tRNA + S-adenosyl-L-homocysteine + H(+). Functionally, catalyzes carboxymethyl transfer from carboxy-S-adenosyl-L-methionine (Cx-SAM) to 5-hydroxyuridine (ho5U) to form 5-carboxymethoxyuridine (cmo5U) at position 34 in tRNAs. This is tRNA U34 carboxymethyltransferase from Pseudomonas fluorescens (strain Pf0-1).